We begin with the raw amino-acid sequence, 332 residues long: Delta-aminolevulinic acid dehydratase (332 aa).

Residue K199 is the Schiff-base intermediate with substrate of the active site. 5-aminolevulinate is bound by residues R209 and K221. Residue E237 coordinates Mg(2+). K252 (schiff-base intermediate with substrate) is an active-site residue. Residues S278 and Y317 each contribute to the 5-aminolevulinate site.

Belongs to the ALAD family. In terms of assembly, homooctamer.

The catalysed reaction is 2 5-aminolevulinate = porphobilinogen + 2 H2O + H(+). The protein operates within porphyrin-containing compound metabolism; protoporphyrin-IX biosynthesis; coproporphyrinogen-III from 5-aminolevulinate: step 1/4. Catalyzes an early step in the biosynthesis of tetrapyrroles. Binds two molecules of 5-aminolevulinate per subunit, each at a distinct site, and catalyzes their condensation to form porphobilinogen. The sequence is that of Delta-aminolevulinic acid dehydratase (hemB) from Chlamydia pneumoniae (Chlamydophila pneumoniae).